Here is a 203-residue protein sequence, read N- to C-terminus: Holliday junction branch migration complex subunit RuvA (203 aa).

A domain I region spans residues 1–65 (MIAYIHGKLL…EDAFDLYGFP (65 aa)). A domain II region spans residues 66-144 (CFDDREVFRT…TLKSATVRSG (79 aa)). Residues 145–155 (ACPVEGDRSEF) form a flexible linker region. The domain III stretch occupies residues 155–203 (FLDALSGLRNLGYGDDEVRDFLKDIFDEEPDLDAGGAIRVALKKISQNK).

The protein belongs to the RuvA family. As to quaternary structure, homotetramer. Forms an RuvA(8)-RuvB(12)-Holliday junction (HJ) complex. HJ DNA is sandwiched between 2 RuvA tetramers; dsDNA enters through RuvA and exits via RuvB. An RuvB hexamer assembles on each DNA strand where it exits the tetramer. Each RuvB hexamer is contacted by two RuvA subunits (via domain III) on 2 adjacent RuvB subunits; this complex drives branch migration. In the full resolvosome a probable DNA-RuvA(4)-RuvB(12)-RuvC(2) complex forms which resolves the HJ.

The protein resides in the cytoplasm. In terms of biological role, the RuvA-RuvB-RuvC complex processes Holliday junction (HJ) DNA during genetic recombination and DNA repair, while the RuvA-RuvB complex plays an important role in the rescue of blocked DNA replication forks via replication fork reversal (RFR). RuvA specifically binds to HJ cruciform DNA, conferring on it an open structure. The RuvB hexamer acts as an ATP-dependent pump, pulling dsDNA into and through the RuvAB complex. HJ branch migration allows RuvC to scan DNA until it finds its consensus sequence, where it cleaves and resolves the cruciform DNA. This Maridesulfovibrio salexigens (strain ATCC 14822 / DSM 2638 / NCIMB 8403 / VKM B-1763) (Desulfovibrio salexigens) protein is Holliday junction branch migration complex subunit RuvA.